The sequence spans 141 residues: Lutropin subunit beta (141 aa).

The signal sequence occupies residues 1-20 (MEMLQGLLLWLLLSMGGARA). 6 cysteine pairs are disulfide-bonded: Cys-29–Cys-77, Cys-43–Cys-92, Cys-46–Cys-130, Cys-54–Cys-108, Cys-58–Cys-110, and Cys-113–Cys-120. N-linked (GlcNAc...) asparagine glycans are attached at residues Asn-33 and Asn-50.

This sequence belongs to the glycoprotein hormones subunit beta family. As to quaternary structure, heterodimer of a common alpha chain and a unique beta chain which confers biological specificity to thyrotropin, lutropin, follitropin and gonadotropin.

It is found in the secreted. Functionally, promotes spermatogenesis and ovulation by stimulating the testes and ovaries to synthesize steroids. This is Lutropin subunit beta (LHB) from Macaca fascicularis (Crab-eating macaque).